Here is a 37-residue protein sequence, read N- to C-terminus: Alpha-conotoxin TxID (37 aa).

Residues 1–21 (FDGRNAAGNDKMSALMALTTR) constitute a propeptide that is removed on maturation. Disulfide bonds link Cys23/Cys29 and Cys24/Cys36. Cys36 carries the cysteine amide modification.

The protein belongs to the conotoxin A superfamily. In terms of processing, unmodified Met-32 is essential for toxin binding to rat alpha-3-beta-4/CHRNA3-CHRNB4 nAChR. An oxidation of this methionine provokes a 13.3-fold decrease in inhibitory potency (IC(50)=245 nM instead of 18 nM). Owing to its potent activity, derivatives of this toxin have a potential in the development of a novel drug. Unfortunately, the oxidation of the methionine is readily to happen during toxin synthesis and oxidation steps as well as under oxidative environment in vivo, which should still be considered to find a solution to this major drawback. In terms of tissue distribution, expressed by the venom duct.

It is found in the secreted. Alpha-conotoxins act on postsynaptic membranes, they bind to the nicotinic acetylcholine receptors (nAChR) and thus inhibit them. This toxin inhibits alpha-3-beta-4/CHRNA3-CHRNB4 (IC(50)=3.6-18.38 nM), alpha-6/alpha-3-beta-4 (CHRNA6/CHRNA3-CHRNB4) (IC(50)=33.9-94.1 nM), and alpha-2-beta-4/CHRNA2-CHRNB4 (IC(50)=4550 nM) nAChRs. The toxin competes with agonists in the orthosteric binding site of alpha-3-beta-4/CHRNA3-CHRNB4 and alpha-6-beta-4/CHRNA6-CHRNB4. The protein is Alpha-conotoxin TxID of Conus textile (Cloth-of-gold cone).